The following is a 565-amino-acid chain: NAD-dependent malic enzyme (565 aa).

The Proton donor role is filled by Y104. R157 contributes to the NAD(+) binding site. Residue K175 is the Proton acceptor of the active site. A divalent metal cation is bound by residues E246, D247, and D270. Positions 270 and 418 each coordinate NAD(+).

It belongs to the malic enzymes family. As to quaternary structure, homotetramer. Requires Mg(2+) as cofactor. The cofactor is Mn(2+).

The enzyme catalyses (S)-malate + NAD(+) = pyruvate + CO2 + NADH. It carries out the reaction oxaloacetate + H(+) = pyruvate + CO2. This is NAD-dependent malic enzyme from Klebsiella pneumoniae (strain 342).